The sequence spans 78 residues: DNA-directed RNA polymerase subunit omega (78 aa).

The protein belongs to the RNA polymerase subunit omega family. In cyanobacteria the RNAP catalytic core is composed of 2 alpha, 1 beta, 1 beta', 1 gamma and 1 omega subunit. When a sigma factor is associated with the core the holoenzyme is formed, which can initiate transcription.

The enzyme catalyses RNA(n) + a ribonucleoside 5'-triphosphate = RNA(n+1) + diphosphate. Functionally, promotes RNA polymerase assembly. Latches the N- and C-terminal regions of the beta' subunit thereby facilitating its interaction with the beta and alpha subunits. This chain is DNA-directed RNA polymerase subunit omega, found in Prochlorococcus marinus (strain MIT 9312).